Consider the following 444-residue polypeptide: Tol-Pal system protein TolB (444 aa).

Residues Met-1–Ala-19 form the signal peptide.

This sequence belongs to the TolB family. As to quaternary structure, the Tol-Pal system is composed of five core proteins: the inner membrane proteins TolA, TolQ and TolR, the periplasmic protein TolB and the outer membrane protein Pal. They form a network linking the inner and outer membranes and the peptidoglycan layer.

It localises to the periplasm. Functionally, part of the Tol-Pal system, which plays a role in outer membrane invagination during cell division and is important for maintaining outer membrane integrity. This is Tol-Pal system protein TolB from Rickettsia rickettsii (strain Sheila Smith).